The primary structure comprises 336 residues: Coproporphyrin III ferrochelatase (336 aa).

Fe-coproporphyrin III contacts are provided by Ser52 and Tyr116. The Fe(2+) site is built by His176 and Glu259.

Belongs to the ferrochelatase family.

The protein localises to the cytoplasm. The catalysed reaction is Fe-coproporphyrin III + 2 H(+) = coproporphyrin III + Fe(2+). The protein operates within porphyrin-containing compound metabolism; protoheme biosynthesis. Functionally, involved in coproporphyrin-dependent heme b biosynthesis. Catalyzes the insertion of ferrous iron into coproporphyrin III to form Fe-coproporphyrin III. In Mycobacterium leprae (strain Br4923), this protein is Coproporphyrin III ferrochelatase.